Here is a 609-residue protein sequence, read N- to C-terminus: UvrABC system protein C (609 aa).

Residues 15–93 form the GIY-YIG domain; it reads SSAGVYRMYD…IKQYMPKYNV (79 aa). The 36-residue stretch at 202 to 237 folds into the UVR domain; that stretch reads QQVVTNLVTKMEQAAEEFHYEQAAAYRDQITALRKV.

It belongs to the UvrC family. In terms of assembly, interacts with UvrB in an incision complex.

Its subcellular location is the cytoplasm. The UvrABC repair system catalyzes the recognition and processing of DNA lesions. UvrC both incises the 5' and 3' sides of the lesion. The N-terminal half is responsible for the 3' incision and the C-terminal half is responsible for the 5' incision. This Shewanella denitrificans (strain OS217 / ATCC BAA-1090 / DSM 15013) protein is UvrABC system protein C.